The chain runs to 363 residues: UDP-N-acetylglucosamine--N-acetylmuramyl-(pentapeptide) pyrophosphoryl-undecaprenol N-acetylglucosamine transferase (363 aa).

UDP-N-acetyl-alpha-D-glucosamine contacts are provided by residues 10–12 (TGG), Asn124, Ser195, Ile250, and Gln295.

This sequence belongs to the glycosyltransferase 28 family. MurG subfamily.

The protein resides in the cell membrane. It carries out the reaction di-trans,octa-cis-undecaprenyl diphospho-N-acetyl-alpha-D-muramoyl-L-alanyl-D-glutamyl-meso-2,6-diaminopimeloyl-D-alanyl-D-alanine + UDP-N-acetyl-alpha-D-glucosamine = di-trans,octa-cis-undecaprenyl diphospho-[N-acetyl-alpha-D-glucosaminyl-(1-&gt;4)]-N-acetyl-alpha-D-muramoyl-L-alanyl-D-glutamyl-meso-2,6-diaminopimeloyl-D-alanyl-D-alanine + UDP + H(+). It functions in the pathway cell wall biogenesis; peptidoglycan biosynthesis. Its function is as follows. Cell wall formation. Catalyzes the transfer of a GlcNAc subunit on undecaprenyl-pyrophosphoryl-MurNAc-pentapeptide (lipid intermediate I) to form undecaprenyl-pyrophosphoryl-MurNAc-(pentapeptide)GlcNAc (lipid intermediate II). The polypeptide is UDP-N-acetylglucosamine--N-acetylmuramyl-(pentapeptide) pyrophosphoryl-undecaprenol N-acetylglucosamine transferase (Halalkalibacterium halodurans (strain ATCC BAA-125 / DSM 18197 / FERM 7344 / JCM 9153 / C-125) (Bacillus halodurans)).